A 149-amino-acid polypeptide reads, in one-letter code: Large ribosomal subunit protein bL9 (149 aa).

The protein belongs to the bacterial ribosomal protein bL9 family.

Its function is as follows. Binds to the 23S rRNA. In Legionella pneumophila (strain Paris), this protein is Large ribosomal subunit protein bL9.